A 533-amino-acid polypeptide reads, in one-letter code: 2,3-bisphosphoglycerate-independent phosphoglycerate mutase (533 aa).

Residues aspartate 15 and serine 65 each contribute to the Mn(2+) site. Serine 65 acts as the Phosphoserine intermediate in catalysis. Residues histidine 126, 156–157, arginine 188, arginine 194, 258–261, and lysine 331 each bind substrate; these read RD and RPDR. Residues aspartate 398, histidine 402, aspartate 439, histidine 440, and histidine 457 each coordinate Mn(2+).

It belongs to the BPG-independent phosphoglycerate mutase family. In terms of assembly, monomer. Mn(2+) serves as cofactor.

The catalysed reaction is (2R)-2-phosphoglycerate = (2R)-3-phosphoglycerate. It functions in the pathway carbohydrate degradation; glycolysis; pyruvate from D-glyceraldehyde 3-phosphate: step 3/5. Functionally, catalyzes the interconversion of 2-phosphoglycerate and 3-phosphoglycerate. This is 2,3-bisphosphoglycerate-independent phosphoglycerate mutase from Nostoc sp. (strain PCC 7120 / SAG 25.82 / UTEX 2576).